A 55-amino-acid polypeptide reads, in one-letter code: Large ribosomal subunit protein bL33 (55 aa).

The protein belongs to the bacterial ribosomal protein bL33 family.

The protein is Large ribosomal subunit protein bL33 of Methylobacterium nodulans (strain LMG 21967 / CNCM I-2342 / ORS 2060).